Here is a 78-residue protein sequence, read N- to C-terminus: Sec-independent protein translocase protein TatA (78 aa).

Residues 1-21 (MGSLSIWHWLIVLLIVALVFG) traverse the membrane as a helical segment. 2 stretches are compositionally biased toward basic and acidic residues: residues 39–57 (FKEGMKDGETPEGQQRDQL) and 65–78 (VDAKEKAPHSGDSR). Residues 39 to 78 (FKEGMKDGETPEGQQRDQLSRTNTVDVDAKEKAPHSGDSR) form a disordered region.

Belongs to the TatA/E family. As to quaternary structure, the Tat system comprises two distinct complexes: a TatABC complex, containing multiple copies of TatA, TatB and TatC subunits, and a separate TatA complex, containing only TatA subunits. Substrates initially bind to the TatABC complex, which probably triggers association of the separate TatA complex to form the active translocon.

It is found in the cell inner membrane. Its function is as follows. Part of the twin-arginine translocation (Tat) system that transports large folded proteins containing a characteristic twin-arginine motif in their signal peptide across membranes. TatA could form the protein-conducting channel of the Tat system. In Paraburkholderia phymatum (strain DSM 17167 / CIP 108236 / LMG 21445 / STM815) (Burkholderia phymatum), this protein is Sec-independent protein translocase protein TatA.